The sequence spans 424 residues: Serine/threonine-protein kinase H1 (424 aa).

A lipid anchor (N-myristoyl glycine) is attached at Gly-2. Cys-3 carries the S-palmitoyl cysteine lipid modification. Residues 59-79 are disordered; sequence APPCPGVPNTGHTAPPSEPPR. In terms of domain architecture, Protein kinase spans 98 to 355; it reads YDIKALIGRG…ALQALRHPWV (258 aa). ATP contacts are provided by residues 104 to 112 and Lys-127; that span reads IGRGSFSRV. Asp-218 acts as the Proton acceptor in catalysis. A disordered region spans residues 378–408; it reads RASSRCQSTKSSQSTRSSRSTRSNKSRRVRE. Phosphoserine; by autocatalysis is present on residues Ser-380 and Ser-381. Residues 381-398 show a composition bias toward low complexity; it reads SRCQSTKSSQSTRSSRST.

The protein belongs to the protein kinase superfamily. CAMK Ser/Thr protein kinase family. In terms of assembly, homodimer. In terms of processing, autophosphorylated on serine residues. Post-translationally, myristoylated. Required for membrane association. Prerequisite for palmitoylation to occur. Palmitoylated.

It localises to the golgi apparatus. The protein localises to the cytoplasm. Its subcellular location is the cytoskeleton. It is found in the microtubule organizing center. The protein resides in the centrosome. It localises to the nucleus speckle. The protein localises to the endoplasmic reticulum membrane. Its subcellular location is the cell membrane. It catalyses the reaction L-seryl-[protein] + ATP = O-phospho-L-seryl-[protein] + ADP + H(+). It carries out the reaction L-threonyl-[protein] + ATP = O-phospho-L-threonyl-[protein] + ADP + H(+). Activity depends on Ca(2+) concentration. Functionally, serine/threonine protein kinase that may be involved in the regulation of pre-mRNA processing. It may phosphorylate components of nuclear splice factor compartments (SFC), such as non-snRNP splicing factors containing a serine/arginine-rich domain (SR proteins). Reversible phosphorylation of SR proteins may cause their release into the nucleoplasm and change their local concentration, thereby influencing alternative splicing. This is Serine/threonine-protein kinase H1 (Pskh1) from Mus musculus (Mouse).